A 339-amino-acid polypeptide reads, in one-letter code: uncharacterized protein (339 aa).

Positions 54, 78, 101, 128, 213, and 217 each coordinate NADP(+). Tyr213 acts as the Proton donor in catalysis. Lys217 (lowers pKa of active site Tyr) is an active-site residue.

The protein belongs to the short-chain dehydrogenases/reductases (SDR) family.

This is an uncharacterized protein from Schizosaccharomyces pombe (strain 972 / ATCC 24843) (Fission yeast).